Here is a 665-residue protein sequence, read N- to C-terminus: Prelamin-A/C (665 aa).

At methionine 1 the chain carries N-acetylmethionine. Residues 1 to 25 (METPSQRRATRSGAQASSTPLSPTR) are disordered. The tract at residues 1 to 33 (METPSQRRATRSGAQASSTPLSPTRITRLQEKE) is head. Residues 1–130 (METPSQRRAT…TKKEGDLLAA (130 aa)) are interaction with MLIP. A Phosphothreonine modification is found at threonine 3. Serine 5 carries the post-translational modification Phosphoserine. Position 10 is a phosphothreonine (threonine 10). Phosphoserine occurs at positions 12 and 18. Residue threonine 19 is modified to Phosphothreonine. A Phosphoserine modification is found at serine 22. Residues 31 to 387 (EKEDLQELND…KLLEGEEERL (357 aa)) form the IF rod domain. The residue at position 32 (lysine 32) is an N6-acetyllysine; alternate. Lysine 32 is modified (N6-succinyllysine; alternate). A Glycyl lysine isopeptide (Lys-Gly) (interchain with G-Cter in SUMO2); alternate cross-link involves residue lysine 32. Residues 34–70 (DLQELNDRLAVYIDRVRSLETENAGLRLRITESEEVV) are coil 1A. Residues serine 51, serine 66, and serine 71 each carry the phosphoserine modification. Residues 71–80 (SREVSGIKAA) form a linker 1 region. An N6-acetyllysine mark is found at lysine 78 and lysine 97. The coil 1B stretch occupies residues 81 to 218 (YEAELGDARK…NIYSEELRET (138 aa)). A Glycyl lysine isopeptide (Lys-Gly) (interchain with G-Cter in SUMO2) cross-link involves residue lysine 97. Residue serine 107 is modified to Phosphoserine. Lysine 108, lysine 114, lysine 123, lysine 135, lysine 144, and lysine 155 each carry N6-acetyllysine. Residue lysine 171 is modified to N6-acetyllysine; alternate. At lysine 171 the chain carries N6-succinyllysine; alternate. A Glycyl lysine isopeptide (Lys-Gly) (interchain with G-Cter in SUMO2); alternate cross-link involves residue lysine 171. Residues lysine 180, lysine 201, and lysine 208 each carry the N6-acetyllysine modification. Residue lysine 201 forms a Glycyl lysine isopeptide (Lys-Gly) (interchain with G-Cter in SUMO2); alternate linkage. Residue lysine 201 forms a Glycyl lysine isopeptide (Lys-Gly) (interchain with G-Cter in SUMO); alternate linkage. A Glycyl lysine isopeptide (Lys-Gly) (interchain with G-Cter in SUMO2) cross-link involves residue lysine 208. Phosphoserine is present on serine 212. Residues lysine 219 and lysine 233 each participate in a glycyl lysine isopeptide (Lys-Gly) (interchain with G-Cter in SUMO2) cross-link. The interval 219–242 (KRRHETRLVEIDNGKQREFESRLA) is linker 2. N6-acetyllysine occurs at positions 233, 260, 265, and 270. The segment at 243 to 383 (DALQELRAQH…HAYRKLLEGE (141 aa)) is coil 2. A Glycyl lysine isopeptide (Lys-Gly) (interchain with G-Cter in SUMO2); alternate cross-link involves residue lysine 260. Residue lysine 270 forms a Glycyl lysine isopeptide (Lys-Gly) (interchain with G-Cter in SUMO2); alternate linkage. Residues serine 277, serine 282, serine 301, and serine 307 each carry the phosphoserine modification. Lysine 311 participates in a covalent cross-link: Glycyl lysine isopeptide (Lys-Gly) (interchain with G-Cter in SUMO2); alternate. Lysine 311, lysine 316, and lysine 341 each carry N6-acetyllysine. Glycyl lysine isopeptide (Lys-Gly) (interchain with G-Cter in SUMO2) cross-links involve residues lysine 366 and lysine 378. The disordered stretch occupies residues 384 to 442 (EERLRLSPSPTSQRSRGRASSHSSQSQGGGSVTKKRKLESSESRSSFSQHARTSGRVAV). Residues 384 to 665 (EERLRLSPSP…SQSSQNCSIM (282 aa)) are tail. 10 positions are modified to phosphoserine: serine 390, serine 392, serine 395, serine 398, serine 403, serine 404, serine 406, serine 407, serine 409, and serine 414. Position 392 is a phosphoserine; by CDK1 (serine 392). Over residues 395–409 (SQRSRGRASSHSSQS) the composition is skewed to low complexity. Threonine 416 is subject to Phosphothreonine. N6-acetyllysine is present on residues lysine 417 and lysine 420. Glycyl lysine isopeptide (Lys-Gly) (interchain with G-Cter in SUMO2) cross-links involve residues lysine 417 and lysine 420. The Nuclear localization signal motif lies at 417-422 (KKRKLE). A phosphoserine mark is found at serine 423, serine 426, serine 429, and serine 431. One can recognise an LTD domain in the interval 428–545 (SSFSQHARTS…EEVAMRKLVR (118 aa)). A Glycyl lysine isopeptide (Lys-Gly) (interchain with G-Cter in SUMO2); alternate cross-link involves residue lysine 450. 2 positions are modified to N6-acetyllysine: lysine 450 and lysine 457. Phosphoserine occurs at positions 458, 460, and 463. Position 486 is an N6-acetyllysine (lysine 486). Residue lysine 486 forms a Glycyl lysine isopeptide (Lys-Gly) (interchain with G-Cter in SUMO2) linkage. Threonine 496 bears the Phosphothreonine mark. At serine 500 the chain carries Phosphoserine. Phosphothreonine is present on residues threonine 505 and threonine 510. A phosphoserine mark is found at serine 533 and serine 546. A Phosphothreonine modification is found at threonine 548. The interval 553 to 577 (NEDDDEDGEELLHHHRGSHCSGSGD) is disordered. Phosphoserine occurs at positions 570, 572, and 573. Lysine 599 is covalently cross-linked (Glycyl lysine isopeptide (Lys-Gly) (interchain with G-Cter in SUMO2); alternate). Lysine 599 participates in a covalent cross-link: Glycyl lysine isopeptide (Lys-Gly) (interchain with G-Cter in SUMO1); alternate. A phosphoserine mark is found at serine 613, serine 614, serine 617, and serine 620. O-linked (GlcNAc) serine glycosylation is found at serine 626 and serine 629. Phosphoserine is present on residues serine 629, serine 633, serine 637, and serine 653. A propeptide spans 648 to 662 (LLGNSSPRSQSSQNC) (removed in Lamin-A/C form). The residue at position 662 (cysteine 662) is a Cysteine methyl ester. Cysteine 662 carries S-farnesyl cysteine lipidation. A propeptide spans 663 to 665 (SIM) (removed in Prelamin-A/C form and in Lamin-A/C form).

This sequence belongs to the intermediate filament family. As to quaternary structure, homodimer of lamin A and lamin C. Lamin dimers then assemble into dimeric head-to-tail polymers. Ultimately, two head-to-tail polymers assemble laterally into a protofilament with a uniformly shaped rod of 3.5 nm in diameter. Interacts with lamin-associated polypeptides IA, IB and TMPO-alpha, RB1 and with emerin. Proteolytically processed isoform A interacts with NARF. Interacts with SREBF1, SREBF2, SUN1, SUN2 and TMEM43. Interacts with TMEM201. Prelamin-A/C interacts with EMD. Interacts with DMPK; may regulate nuclear envelope stability. Interacts with MLIP. Interacts with SUV39H1; the interaction increases stability of SUV39H1. Interacts with ITSN1 isoform 2. Interacts with IFFO1; the interaction forms an interior nucleoskeleton and the recruitment to DNA double-strand breaks. Interacts with EMD. In terms of assembly, interacts (via C-terminus) with LEMD2 (via N-terminus) (in vitro). Post-translationally, proteolytic cleavage of the C-terminal of 18 residues of prelamin-A/C results in the production of lamin-A/C. The prelamin-A/C maturation pathway includes farnesylation of CAAX motif by protein farnesyltransferase (FNTA and FNTB), removal of the last three amino acids (-AAX) by RCE1/FACE2 and/or ZMPSTE24, methylation of the C-terminal cysteine by ICMT and endoproteolytic removal of the last 15 C-terminal amino acids by ZMPSTE24. Proteolytic cleavage requires prior farnesylation and methylation, and absence of these blocks cleavage. In terms of processing, farnesylation of prelamin-A/C facilitates nuclear envelope targeting. Phosphorylation plays a key role in lamin organization, subcellular localization and nuclear envelope disintegration. Phosphorylation by CDK1 at Ser-22 and Ser-392 at the onset of mitosis drives lamin disassembly and nuclear envelope breakdown. Phosphorylation at Ser-22 and Ser-392 during interphase promotes localization to the nucleoplasm and regulates lamina assembly. Phosphorylation at Ser-22, Ser-392 and Ser-629 during interphase causes redistribution between the nucleus and the cytoplasm. Phosphorylation at Ser-22 by CDK1 regulates matrix stiffness. Phosphorylation status of Ser-22 determines its localization between double-strand break (DSB) sites and the nuclear matrix. Phosphorylated by ATR at Ser-282 in response to DNA damage, leading to lamin disassembly and nuclear envelope rupture. Phosphorylation also regulates stability in micronuclei arising from genome instability: phosphorylation at Ser-395 by ATR in response to genome instability and double-stranded DNA breaks primes LMNA for subsequent phosphorylation at Ser-392 by CDK1 and micronuclei envelope rupture. The rupture of micronuclear envelope triggers the cGAS-STING pathway thereby activating the type I interferon response and innate immunity. Post-translationally, isoform C is phosphorylated on Ser-392, Ser-407 and Ser-409 at interphase. In terms of processing, acetylation by KAT8 is required for nuclear architecture. Sumoylation is necessary for the localization to the nuclear envelope. Post-translationally, the N-terminus is blocked. In terms of tissue distribution, expressed in liver and in bone marrow (at protein level). Expressed in cardiomyocytes. As to expression, specifically expressed in germ cells.

The protein resides in the nucleus lamina. Its subcellular location is the nucleus envelope. The protein localises to the nucleus. It localises to the nucleoplasm. It is found in the nucleus matrix. In terms of biological role, lamins are intermediate filament proteins that assemble into a filamentous meshwork, and which constitute the major components of the nuclear lamina, a fibrous layer on the nucleoplasmic side of the inner nuclear membrane. Lamins provide a framework for the nuclear envelope, bridging the nuclear envelope and chromatin, thereby playing an important role in nuclear assembly, chromatin organization, nuclear membrane and telomere dynamics. Lamin A and C also regulate matrix stiffness by conferring nuclear mechanical properties. The structural integrity of the lamina is strictly controlled by the cell cycle, as seen by the disintegration and formation of the nuclear envelope in prophase and telophase, respectively. Lamin A and C are present in equal amounts in the lamina of mammals. Also invoved in DNA repair: recruited by DNA repair proteins XRCC4 and IFFO1 to the DNA double-strand breaks (DSBs) to prevent chromosome translocation by immobilizing broken DNA ends. Required for normal development of peripheral nervous system and skeletal muscle and for muscle satellite cell proliferation. Required for osteoblastogenesis and bone formation. Also prevents fat infiltration of muscle and bone marrow, helping to maintain the volume and strength of skeletal muscle and bone. Required for cardiac homeostasis. Its function is as follows. Prelamin-A/C can accelerate smooth muscle cell senescence. It acts to disrupt mitosis and induce DNA damage in vascular smooth muscle cells (VSMCs), leading to mitotic failure, genomic instability, and premature senescence. Functionally, isoform C2 may have a role in determining the organization of nuclear and chromosomal structures during spermatogenesis. The protein is Prelamin-A/C (Lmna) of Mus musculus (Mouse).